Reading from the N-terminus, the 358-residue chain is Alanine racemase (358 aa).

The Proton acceptor; specific for D-alanine role is filled by K34. Residue K34 is modified to N6-(pyridoxal phosphate)lysine. Position 129 (R129) interacts with substrate. Residue Y254 is the Proton acceptor; specific for L-alanine of the active site. Position 302 (M302) interacts with substrate.

Belongs to the alanine racemase family. Requires pyridoxal 5'-phosphate as cofactor.

It carries out the reaction L-alanine = D-alanine. It functions in the pathway amino-acid biosynthesis; D-alanine biosynthesis; D-alanine from L-alanine: step 1/1. Its function is as follows. Catalyzes the interconversion of L-alanine and D-alanine. May also act on other amino acids. This chain is Alanine racemase (alr), found in Aliivibrio salmonicida (strain LFI1238) (Vibrio salmonicida (strain LFI1238)).